The sequence spans 115 residues: U3-lycotoxin-Ls1a (115 aa).

An N-terminal signal peptide occupies residues M1–A20. Positions E21–R44 are excised as a propeptide. 4 disulfide bridges follow: C48–C63, C55–C72, C62–C87, and C74–C85.

This sequence belongs to the neurotoxin 19 (CSTX) family. 01 subfamily. As to expression, expressed by the venom gland.

The protein resides in the secreted. The sequence is that of U3-lycotoxin-Ls1a from Lycosa singoriensis (Wolf spider).